The following is a 450-amino-acid chain: tRNA modification GTPase MnmE (450 aa).

3 residues coordinate (6S)-5-formyl-5,6,7,8-tetrahydrofolate: K21, E78, and K117. The TrmE-type G domain occupies G213–P376. N223 contributes to the K(+) binding site. Residues N223–S228, S242–T248, and D267–G270 contribute to the GTP site. Position 227 (S227) interacts with Mg(2+). S242, I244, and T247 together coordinate K(+). T248 serves as a coordination point for Mg(2+). K450 is a binding site for (6S)-5-formyl-5,6,7,8-tetrahydrofolate.

Belongs to the TRAFAC class TrmE-Era-EngA-EngB-Septin-like GTPase superfamily. TrmE GTPase family. Homodimer. Heterotetramer of two MnmE and two MnmG subunits. The cofactor is K(+).

Its subcellular location is the cytoplasm. Exhibits a very high intrinsic GTPase hydrolysis rate. Involved in the addition of a carboxymethylaminomethyl (cmnm) group at the wobble position (U34) of certain tRNAs, forming tRNA-cmnm(5)s(2)U34. In Helicobacter acinonychis (strain Sheeba), this protein is tRNA modification GTPase MnmE.